Consider the following 296-residue polypeptide: Pre-mRNA-splicing factor CWC23 (296 aa).

A J domain is found at 14–86 (DLYKLLELNY…AKKAEYDQWV (73 aa)).

Belongs to the DnaJ family. Associated with the spliceosome.

It localises to the cytoplasm. The protein localises to the nucleus. Functionally, involved in pre-mRNA splicing. May be involved in endoplasmic reticulum-associated protein degradation (ERAD) and required for growth at low and high temperatures. The chain is Pre-mRNA-splicing factor CWC23 (CWC23) from Candida glabrata (strain ATCC 2001 / BCRC 20586 / JCM 3761 / NBRC 0622 / NRRL Y-65 / CBS 138) (Yeast).